The primary structure comprises 1254 residues: Juxtamembrane domain-associated catenin (1254 aa).

3 disordered regions span residues 1 to 38, 84 to 106, and 145 to 209; these read MISS…TMRK, AGPT…DNPP, and PYSN…SAPG. Over residues 12 to 22 the composition is skewed to acidic residues; sequence PIPEEGTEADG. Over residues 145-157 the composition is skewed to polar residues; sequence PYSNIDFDSSGLP. 4 Fibronectin type-III domains span residues 207–302, 315–411, 428–518, and 530–624; these read APGV…IPIS, APGR…IRPA, PPGQ…LRPT, and ILEA…IEPS. The interval 412-433 is disordered; the sequence is APQRHVPARKVSESVQPPGQPQ. A disordered region spans residues 662–685; that stretch reads MVRESPPLPERDDSPPPLRRANNN. ARM repeat units follow at residues 733–775, 777–820, 874–922, 969–1012, and 1016–1058; these read GGIP…AVME, DGVR…ESAT, NLIE…YDPA, HVVK…RAAV, and KGLP…KYAL. A disordered region spans residues 920–960; it reads DPAAAHSSSSKNMKHVASPKPEKKKKDKEKKKDKNPKNIVT. The tract at residues 1159 to 1254 is disordered; it reads GTARRGDSST…GGGNIDDSWV (96 aa). Polar residues predominate over residues 1166–1176; that stretch reads SSTLARPISSQ. The span at 1177-1187 shows a compositional bias: basic and acidic residues; sequence GRERPSMHQLD.

Belongs to the beta-catenin family. Associated with the catenin-cadherin complex consisting of hmr-1, hmp-1 and hmp-2. Interacts with hmr-1. Interacts with picc-1. Epidermal cells.

It is found in the cell junction. The protein resides in the adherens junction. The protein localises to the nucleus. Its function is as follows. May act as a positive modulator of hmr-1 function during epidermal morphogenesis. Required for proper localization of other junctional components, such as pac-1. The protein is Juxtamembrane domain-associated catenin (jac-1) of Caenorhabditis elegans.